The chain runs to 154 residues: Ascorbate-specific PTS system EIIA component (154 aa).

One can recognise a PTS EIIA type-2 domain in the interval 6–150 (SLAENKSIRL…QEVLDLIDRT (145 aa)). His-68 functions as the Tele-phosphohistidine intermediate in the catalytic mechanism. His-68 bears the Phosphohistidine mark.

Its subcellular location is the cytoplasm. The phosphoenolpyruvate-dependent sugar phosphotransferase system (sugar PTS), a major carbohydrate active transport system, catalyzes the phosphorylation of incoming sugar substrates concomitantly with their translocation across the cell membrane. The enzyme II UlaABC PTS system is involved in ascorbate transport. The chain is Ascorbate-specific PTS system EIIA component (ulaC) from Shigella boydii serotype 4 (strain Sb227).